Reading from the N-terminus, the 153-residue chain is Fucose mutarotase (153 aa).

The Proton donor role is filled by histidine 24. Aspartate 32 contributes to the substrate binding site. Aspartate 69 is a catalytic residue. Substrate is bound by residues methionine 79, tyrosine 119, tyrosine 137, and asparagine 139. Tyrosine 119 is an active-site residue.

This sequence belongs to the RbsD / FucU family. As to quaternary structure, mainly homodimer, but also exists as homotetramer, homooctamer, and homodecamer. The homodimeric form seems catalytically inactive.

The catalysed reaction is alpha-L-fucose = beta-L-fucose. It participates in carbohydrate metabolism; L-fucose metabolism. Functionally, involved in the interconversion between alpha- and beta-L-fucoses. L-Fucose (6-deoxy-L-galactose) exists as alpha-L-fucose (29.5%) and beta-L-fucose (70.5%), the beta-form is metabolized through the salvage pathway. GDP-L-fucose formed either by the de novo or salvage pathways is transported into the endoplasmic reticulum, where it serves as a substrate for N- and O-glycosylations by fucosyltransferases. Fucosylated structures expressed on cell surfaces or secreted in biological fluids are believed to play a critical role in cell-cell adhesion and recognition processes. This is Fucose mutarotase (FUOM) from Bos taurus (Bovine).